The primary structure comprises 221 residues: MTEETPGFDEKPDVPSGATPEDAEPKAAPSEGAAPAGDAAAAAQTAAQTAGLTAQLDQVRTALGERTADLQRLQAEYQNYRRRVERDRIAVKEIAIANLLTELLPTLDDIGRAREHGELVGGFKSVAESLETVAAKMGLQQFGKEGEPFDPTIHEALMHSYAPDVTETTCVAILQPGYRIGERTIRPARVAVAEPQPGAQTVKADEAEAADDKESGGPEEG.

2 disordered regions span residues Met1–Gln44 and Val192–Gly221. Positions Lys26 to Gln44 are enriched in low complexity. Residues Lys203–Gly221 are compositionally biased toward basic and acidic residues.

Belongs to the GrpE family. As to quaternary structure, homodimer.

It is found in the cytoplasm. Participates actively in the response to hyperosmotic and heat shock by preventing the aggregation of stress-denatured proteins, in association with DnaK and GrpE. It is the nucleotide exchange factor for DnaK and may function as a thermosensor. Unfolded proteins bind initially to DnaJ; upon interaction with the DnaJ-bound protein, DnaK hydrolyzes its bound ATP, resulting in the formation of a stable complex. GrpE releases ADP from DnaK; ATP binding to DnaK triggers the release of the substrate protein, thus completing the reaction cycle. Several rounds of ATP-dependent interactions between DnaJ, DnaK and GrpE are required for fully efficient folding. This chain is Protein GrpE 1, found in Streptomyces avermitilis (strain ATCC 31267 / DSM 46492 / JCM 5070 / NBRC 14893 / NCIMB 12804 / NRRL 8165 / MA-4680).